We begin with the raw amino-acid sequence, 305 residues long: MVNTERFIQQAVSEIRELTADARVVMALSGGVDSSVCAALAAQAIGERLEPIYVDTGLMRKGETDRIRHLFGHLNLRIVDASDEFLDALAGVADPETKRKIIGERFIRVFEREAEKTGATVLLQGTIYPDRIESEGGIKSHHNVGGMPLGIAFTQVLEPLRDLYKDEVREVAGALGLPREIQHRMPFPGPGLAVRIIGEVTREKVAVIREANAITEEELVEEFRPWQCLAALVGLGTGVKGDIRLHGWIVAVRAVNSRDGMTADPLEVPYPVLFKIASRITAEIPSVARVVYDVTPKPPATIEYE.

The region spanning 2-184 (VNTERFIQQA…LGLPREIQHR (183 aa)) is the GMPS ATP-PPase domain. Residue 29 to 35 (SGGVDSS) coordinates ATP.

Heterodimer composed of a glutamine amidotransferase subunit (A) and a GMP-binding subunit (B).

The catalysed reaction is XMP + L-glutamine + ATP + H2O = GMP + L-glutamate + AMP + diphosphate + 2 H(+). Its pathway is purine metabolism; GMP biosynthesis; GMP from XMP (L-Gln route): step 1/1. In terms of biological role, catalyzes the synthesis of GMP from XMP. In Methanosphaerula palustris (strain ATCC BAA-1556 / DSM 19958 / E1-9c), this protein is GMP synthase [glutamine-hydrolyzing] subunit B.